A 445-amino-acid polypeptide reads, in one-letter code: V-type proton ATPase subunit H (445 aa).

This sequence belongs to the V-ATPase H subunit family. As to quaternary structure, V-ATPase is a heteromultimeric enzyme composed of a peripheral catalytic V1 complex (components A to H) attached to an integral membrane V0 proton pore complex (components: a, c, c', c'' and d).

Functionally, subunit of the peripheral V1 complex of vacuolar ATPase. Subunit H activates the ATPase activity of the enzyme and couples ATPase activity to proton flow. Vacuolar ATPase is responsible for acidifying a variety of intracellular compartments in eukaryotic cells, thus providing most of the energy required for transport processes in the vacuolar system. This Dictyostelium discoideum (Social amoeba) protein is V-type proton ATPase subunit H (vatH).